The primary structure comprises 277 residues: Cell wall protein PGA30 (277 aa).

A signal peptide spans 1–18; it reads MKYFTIATVLTLASSALA. N-linked (GlcNAc...) asparagine glycosylation is found at Asn129 and Asn178. The tract at residues 219–246 is disordered; that stretch reads VLPSSSTEAPPKTSVAAPSTTAEAQTTA. Residues 234-246 show a composition bias toward polar residues; the sequence is AAPSTTAEAQTTA. Residue Gly253 is the site of GPI-anchor amidated glycine attachment. Positions 254 to 277 are cleaved as a propeptide — removed in mature form; it reads GANEIVGGGSMAIALAAAAIGLVI.

Belongs to the SRP1/TIP1 family. The GPI-anchor is attached to the protein in the endoplasmic reticulum and serves to target the protein to the cell surface. There, the glucosamine-inositol phospholipid moiety is cleaved off and the GPI-modified mannoprotein is covalently attached via its lipidless GPI glycan remnant to the 1,6-beta-glucan of the outer cell wall layer.

Its subcellular location is the secreted. The protein resides in the cell wall. It is found in the membrane. Component of the cell wall involved in virulence which plays a role in the relationship between C.albicans and the host. This chain is Cell wall protein PGA30 (PGA30), found in Candida albicans (strain SC5314 / ATCC MYA-2876) (Yeast).